Reading from the N-terminus, the 95-residue chain is MSVTKQDVEYIATLARLSFSEDEKEKMTKELNTILHYVEKLNELDTEEVEALNNMNERHNVLRPDEIVASIENSKAIKNAPDSVERFFKVPKVIG.

This sequence belongs to the GatC family. In terms of assembly, heterotrimer of A, B and C subunits.

The catalysed reaction is L-glutamyl-tRNA(Gln) + L-glutamine + ATP + H2O = L-glutaminyl-tRNA(Gln) + L-glutamate + ADP + phosphate + H(+). The enzyme catalyses L-aspartyl-tRNA(Asn) + L-glutamine + ATP + H2O = L-asparaginyl-tRNA(Asn) + L-glutamate + ADP + phosphate + 2 H(+). Its function is as follows. Allows the formation of correctly charged Asn-tRNA(Asn) or Gln-tRNA(Gln) through the transamidation of misacylated Asp-tRNA(Asn) or Glu-tRNA(Gln) in organisms which lack either or both of asparaginyl-tRNA or glutaminyl-tRNA synthetases. The reaction takes place in the presence of glutamine and ATP through an activated phospho-Asp-tRNA(Asn) or phospho-Glu-tRNA(Gln). This is Aspartyl/glutamyl-tRNA(Asn/Gln) amidotransferase subunit C from Chloroherpeton thalassium (strain ATCC 35110 / GB-78).